A 143-amino-acid polypeptide reads, in one-letter code: Transcriptional regulator MraZ (143 aa).

2 SpoVT-AbrB domains span residues 5-47 (EYEH…PMPV) and 76-119 (ASDL…SAER).

It belongs to the MraZ family. Forms oligomers.

It localises to the cytoplasm. The protein localises to the nucleoid. The protein is Transcriptional regulator MraZ of Herpetosiphon aurantiacus (strain ATCC 23779 / DSM 785 / 114-95).